We begin with the raw amino-acid sequence, 1264 residues long: Valine--tRNA ligase (1264 aa).

S2 carries the post-translational modification N-acetylserine. A GST C-terminal domain is found at 89 to 219 (GSRAAVLVQQ…YSGARPLSHQ (131 aa)). Residues 217–296 (SHQPGPEAPA…GEKKDVSGPM (80 aa)) form a disordered region. Basic and acidic residues-rich tracts occupy residues 234 to 248 (LKKE…EKFQ) and 261 to 275 (GEKK…KRDP). Residues 344-354 (PNVTGSLHLGH) carry the 'HIGH' region motif. 2 positions are modified to phosphoserine: S437 and S527. The residue at position 645 (K645) is an N6-acetyllysine. A 'KMSKS' region motif is present at residues 862-866 (KMSKS). K865 is a binding site for ATP.

It belongs to the class-I aminoacyl-tRNA synthetase family. As to quaternary structure, forms high-molecular-mass aggregates with elongation factor 1.

The enzyme catalyses tRNA(Val) + L-valine + ATP = L-valyl-tRNA(Val) + AMP + diphosphate. Its activity is regulated as follows. Can be regulated by protein kinase C-dependent phosphorylation. Its function is as follows. Catalyzes the attachment of valine to tRNA(Val). The sequence is that of Valine--tRNA ligase from Homo sapiens (Human).